Here is a 124-residue protein sequence, read N- to C-terminus: Small ribosomal subunit protein uS12 (124 aa).

Position 89 is a 3-methylthioaspartic acid (aspartate 89).

This sequence belongs to the universal ribosomal protein uS12 family. In terms of assembly, part of the 30S ribosomal subunit. Contacts proteins S8 and S17. May interact with IF1 in the 30S initiation complex.

With S4 and S5 plays an important role in translational accuracy. Its function is as follows. Interacts with and stabilizes bases of the 16S rRNA that are involved in tRNA selection in the A site and with the mRNA backbone. Located at the interface of the 30S and 50S subunits, it traverses the body of the 30S subunit contacting proteins on the other side and probably holding the rRNA structure together. The combined cluster of proteins S8, S12 and S17 appears to hold together the shoulder and platform of the 30S subunit. The chain is Small ribosomal subunit protein uS12 from Erwinia tasmaniensis (strain DSM 17950 / CFBP 7177 / CIP 109463 / NCPPB 4357 / Et1/99).